A 700-amino-acid polypeptide reads, in one-letter code: Methionine--tRNA ligase (700 aa).

The 'HIGH' region signature appears at 13–23 (PYANGDIHLGH). The Zn(2+) site is built by Cys-144, Cys-147, Cys-157, and Cys-160. The 'KMSKS' region signature appears at 341 to 345 (KMSKS). An ATP-binding site is contributed by Lys-344. The disordered stretch occupies residues 562–587 (QVGAPTASQDDKAAAKNTSPAAMPSS). The segment covering 577-587 (KNTSPAAMPSS) has biased composition (polar residues). Residues 598–700 (DFAKVEMKVA…DEAVIGDSLA (103 aa)) enclose the tRNA-binding domain.

It belongs to the class-I aminoacyl-tRNA synthetase family. MetG type 1 subfamily. Homodimer. Zn(2+) is required as a cofactor.

Its subcellular location is the cytoplasm. It carries out the reaction tRNA(Met) + L-methionine + ATP = L-methionyl-tRNA(Met) + AMP + diphosphate. Its function is as follows. Is required not only for elongation of protein synthesis but also for the initiation of all mRNA translation through initiator tRNA(fMet) aminoacylation. The protein is Methionine--tRNA ligase of Psychrobacter cryohalolentis (strain ATCC BAA-1226 / DSM 17306 / VKM B-2378 / K5).